Consider the following 256-residue polypeptide: UPF0246 protein HCH_04801 (256 aa).

The protein belongs to the UPF0246 family.

In Hahella chejuensis (strain KCTC 2396), this protein is UPF0246 protein HCH_04801.